Consider the following 399-residue polypeptide: Homocysteine-responsive endoplasmic reticulum-resident ubiquitin-like domain member 2 protein (399 aa).

One can recognise a Ubiquitin-like domain in the interval 10 to 89 (VTLVIKAPNQ…HMVHLVCASR (80 aa)). 2 disordered regions span residues 88-144 (SRTP…SIRH) and 211-250 (ASNQ…APEM). Residues 95-106 (PKASTSNKSMGT) are compositionally biased toward polar residues. The span at 107–124 (ASISRSSSEHSGSASPAS) shows a compositional bias: low complexity. Positions 211-221 (ASNQSPSNGEN) are enriched in polar residues. Pro residues predominate over residues 234-246 (SPPPNPPRAPPNV). A helical transmembrane segment spans residues 299 to 319 (FVMVMGAMILVYMHQAGWFPL).

Its subcellular location is the membrane. Its function is as follows. Could be involved in the unfolded protein response (UPR) pathway. This Xenopus tropicalis (Western clawed frog) protein is Homocysteine-responsive endoplasmic reticulum-resident ubiquitin-like domain member 2 protein (herpud2).